The following is a 354-amino-acid chain: Fructose-bisphosphate aldolase (354 aa).

Ser-61 is a binding site for D-glyceraldehyde 3-phosphate. The active-site Proton donor is Asp-104. His-105, Asp-139, Glu-169, and His-221 together coordinate Zn(2+). Gly-222 provides a ligand contact to dihydroxyacetone phosphate. A Zn(2+)-binding site is contributed by His-260. Residues 261 to 263 (GGS) and 282 to 285 (NIDT) each bind dihydroxyacetone phosphate.

This sequence belongs to the class II fructose-bisphosphate aldolase family. As to quaternary structure, homodimer. Zn(2+) is required as a cofactor.

The catalysed reaction is beta-D-fructose 1,6-bisphosphate = D-glyceraldehyde 3-phosphate + dihydroxyacetone phosphate. Its pathway is carbohydrate degradation; glycolysis; D-glyceraldehyde 3-phosphate and glycerone phosphate from D-glucose: step 4/4. Its function is as follows. Catalyzes the aldol condensation of dihydroxyacetone phosphate (DHAP or glycerone-phosphate) with glyceraldehyde 3-phosphate (G3P) to form fructose 1,6-bisphosphate (FBP) in gluconeogenesis and the reverse reaction in glycolysis. In Campylobacter jejuni subsp. jejuni serotype O:23/36 (strain 81-176), this protein is Fructose-bisphosphate aldolase (fba).